Reading from the N-terminus, the 21-residue chain is 78 kDa dihydrolipoyllysine-residue acetyltransferase component of pyruvate dehydrogenase complex (21 aa).

Belongs to the 2-oxoacid dehydrogenase family. Forms a 60-polypeptide structural core. The cofactor is (R)-lipoate.

The protein localises to the mitochondrion matrix. The enzyme catalyses N(6)-[(R)-dihydrolipoyl]-L-lysyl-[protein] + acetyl-CoA = N(6)-[(R)-S(8)-acetyldihydrolipoyl]-L-lysyl-[protein] + CoA. Functionally, the pyruvate dehydrogenase complex catalyzes the overall conversion of pyruvate to acetyl-CoA and CO(2). It contains multiple copies of three enzymatic components: pyruvate dehydrogenase (E1), dihydrolipoamide acetyltransferase (E2) and lipoamide dehydrogenase (E3). This chain is 78 kDa dihydrolipoyllysine-residue acetyltransferase component of pyruvate dehydrogenase complex, found in Solanum tuberosum (Potato).